The sequence spans 444 residues: MFS-type transporter dbaD (444 aa).

Positions 1–13 are enriched in polar residues; it reads MTEQPPQNHSVDL. The segment at 1-57 is disordered; sequence MTEQPPQNHSVDLNQNEDNNENDYRSSSATDAERPCEPKIEESTAKPPTGPPAPPPP. Residue asparagine 8 is glycosylated (N-linked (GlcNAc...) asparagine). Residues 31–44 show a composition bias toward basic and acidic residues; sequence DAERPCEPKIEEST. The segment covering 48–57 has biased composition (pro residues); that stretch reads PTGPPAPPPP. 11 consecutive transmembrane segments (helical) span residues 62 to 82, 107 to 127, 134 to 154, 159 to 179, 192 to 212, 223 to 243, 267 to 287, 301 to 323, 330 to 350, 356 to 376, and 394 to 414; these read LVAW…WGIM, WIGS…GSIY, ALLV…SLCK, VLLA…VPCV, TALG…PIVL, WSVR…IAVM, MAFT…LFYI, MAFY…PNAM, FNLI…LLAV, LIVI…LPPL, and MGFG…GAIL. N-linked (GlcNAc...) asparagine glycosylation is present at asparagine 421. The chain crosses the membrane as a helical span at residues 424–444; it reads GLWVYGGVTSLVAGFIICIAV.

Belongs to the major facilitator superfamily. Monocarboxylate porter (TC 2.A.1.13) family.

It is found in the cell membrane. Functionally, MFS-type transporter; part of the gene cluster that mediates the biosynthesis of the antibiotic 2,4- dihydroxy-3-methyl-6-(2-oxopropyl)benzaldehyde (DHMBA) and its derivatives. Is probably involved in the transport of the metabolites to the environment. This is MFS-type transporter dbaD from Emericella nidulans (strain FGSC A4 / ATCC 38163 / CBS 112.46 / NRRL 194 / M139) (Aspergillus nidulans).